A 102-amino-acid chain; its full sequence is ATP-dependent Clp protease adapter protein ClpS (102 aa).

It belongs to the ClpS family. As to quaternary structure, binds to the N-terminal domain of the chaperone ClpA.

Functionally, involved in the modulation of the specificity of the ClpAP-mediated ATP-dependent protein degradation. The chain is ATP-dependent Clp protease adapter protein ClpS from Shewanella denitrificans (strain OS217 / ATCC BAA-1090 / DSM 15013).